Here is a 286-residue protein sequence, read N- to C-terminus: Mitochondrial dicarboxylate carrier (286 aa).

3 Solcar repeats span residues 7–87 (SRWY…MRDY), 100–187 (SKVL…AKQL), and 196–279 (DNIF…LRKH). Transmembrane regions (helical) follow at residues 9–29 (WYFG…LDLL), 62–81 (GLSA…FAIY), and 102–122 (VLLG…ADLV). Lys-158 carries the N6-acetyllysine modification. The next 3 helical transmembrane spans lie at 162–181 (GATM…LSCY), 202–222 (FLSS…LDVL), and 254–274 (GLVP…MFLE).

The protein belongs to the mitochondrial carrier (TC 2.A.29) family. Expressed most strongly in liver, then kidney, and at lower levels in heart and brain.

It is found in the mitochondrion inner membrane. It catalyses the reaction (S)-malate(in) + phosphate(out) = (S)-malate(out) + phosphate(in). It carries out the reaction malonate(out) + (S)-malate(in) = malonate(in) + (S)-malate(out). The enzyme catalyses (S)-malate(in) + succinate(out) = (S)-malate(out) + succinate(in). The catalysed reaction is (S)-malate(in) + sulfate(out) = (S)-malate(out) + sulfate(in). It catalyses the reaction malonate(out) + phosphate(in) = malonate(in) + phosphate(out). It carries out the reaction succinate(out) + phosphate(in) = succinate(in) + phosphate(out). The enzyme catalyses sulfate(out) + phosphate(in) = sulfate(in) + phosphate(out). The catalysed reaction is malonate(out) + succinate(in) = malonate(in) + succinate(out). Its function is as follows. Catalyzes the electroneutral exchange or flux of physiologically important metabolites such as dicarboxylates (malonate, malate, succinate), inorganic sulfur-containing anions, and phosphate, across mitochondrial inner membrane. Plays an important role in gluconeogenesis, fatty acid metabolism, urea synthesis, and sulfur metabolism, particularly in liver, by supplying the substrates for the different metabolic processes. Regulates fatty acid release from adipocytes, and contributes to systemic insulin sensitivity. This chain is Mitochondrial dicarboxylate carrier, found in Rattus norvegicus (Rat).